A 350-amino-acid polypeptide reads, in one-letter code: tRNA uridine(34) hydroxylase (350 aa).

The region spanning 146 to 240 (DDPDAVFIDM…YARRARAQGL (95 aa)) is the Rhodanese domain. The active-site Cysteine persulfide intermediate is Cys200. Over residues 319 to 328 (RRRRAGRENG) the composition is skewed to basic and acidic residues. The interval 319–350 (RRRRAGRENGNKIFNKSRGRLNSKLSIPDPAE) is disordered.

The protein belongs to the TrhO family.

It catalyses the reaction uridine(34) in tRNA + AH2 + O2 = 5-hydroxyuridine(34) in tRNA + A + H2O. Its function is as follows. Catalyzes oxygen-dependent 5-hydroxyuridine (ho5U) modification at position 34 in tRNAs. The polypeptide is tRNA uridine(34) hydroxylase (Salmonella newport (strain SL254)).